Reading from the N-terminus, the 186-residue chain is ATP synthase subunit delta (186 aa).

It belongs to the ATPase delta chain family. F-type ATPases have 2 components, F(1) - the catalytic core - and F(0) - the membrane proton channel. F(1) has five subunits: alpha(3), beta(3), gamma(1), delta(1), epsilon(1). CF(0) has four main subunits: a(1), b(1), b'(1) and c(10-14). The alpha and beta chains form an alternating ring which encloses part of the gamma chain. F(1) is attached to F(0) by a central stalk formed by the gamma and epsilon chains, while a peripheral stalk is formed by the delta, b and b' chains.

The protein localises to the cell inner membrane. Functionally, f(1)F(0) ATP synthase produces ATP from ADP in the presence of a proton or sodium gradient. F-type ATPases consist of two structural domains, F(1) containing the extramembraneous catalytic core and F(0) containing the membrane proton channel, linked together by a central stalk and a peripheral stalk. During catalysis, ATP synthesis in the catalytic domain of F(1) is coupled via a rotary mechanism of the central stalk subunits to proton translocation. This protein is part of the stalk that links CF(0) to CF(1). It either transmits conformational changes from CF(0) to CF(1) or is implicated in proton conduction. This chain is ATP synthase subunit delta, found in Rhodopseudomonas palustris (strain BisB5).